A 235-amino-acid polypeptide reads, in one-letter code: Ribonuclease PH (235 aa).

Phosphate-binding positions include arginine 86 and 124 to 126 (GTR).

Belongs to the RNase PH family. Homohexameric ring arranged as a trimer of dimers.

It carries out the reaction tRNA(n+1) + phosphate = tRNA(n) + a ribonucleoside 5'-diphosphate. Its function is as follows. Phosphorolytic 3'-5' exoribonuclease that plays an important role in tRNA 3'-end maturation. Removes nucleotide residues following the 3'-CCA terminus of tRNAs; can also add nucleotides to the ends of RNA molecules by using nucleoside diphosphates as substrates, but this may not be physiologically important. Probably plays a role in initiation of 16S rRNA degradation (leading to ribosome degradation) during starvation. This chain is Ribonuclease PH, found in Francisella tularensis subsp. mediasiatica (strain FSC147).